Consider the following 600-residue polypeptide: Arginine--tRNA ligase (600 aa).

Residues 151–153, H162, Y332, D336, and Q360 each bind L-arginine; that span reads SPN. Positions 152–162 match the 'HIGH' region motif; it reads PNIAKEMHIGH.

The protein belongs to the class-I aminoacyl-tRNA synthetase family.

It catalyses the reaction tRNA(Arg) + L-arginine + ATP = L-arginyl-tRNA(Arg) + AMP + diphosphate. In Acanthamoeba polyphaga mimivirus (APMV), this protein is Arginine--tRNA ligase (RARS).